The following is a 309-amino-acid chain: Ribonuclease Z (309 aa).

Zn(2+) is bound by residues histidine 61, histidine 63, aspartate 65, histidine 66, histidine 144, aspartate 212, and histidine 271. Aspartate 65 serves as the catalytic Proton acceptor.

Belongs to the RNase Z family. Homodimer. Requires Zn(2+) as cofactor.

It carries out the reaction Endonucleolytic cleavage of RNA, removing extra 3' nucleotides from tRNA precursor, generating 3' termini of tRNAs. A 3'-hydroxy group is left at the tRNA terminus and a 5'-phosphoryl group is left at the trailer molecule.. In terms of biological role, zinc phosphodiesterase, which displays some tRNA 3'-processing endonuclease activity. Probably involved in tRNA maturation, by removing a 3'-trailer from precursor tRNA. The polypeptide is Ribonuclease Z (Clostridium acetobutylicum (strain ATCC 824 / DSM 792 / JCM 1419 / IAM 19013 / LMG 5710 / NBRC 13948 / NRRL B-527 / VKM B-1787 / 2291 / W)).